Consider the following 201-residue polypeptide: Glutathione peroxidase 1 (201 aa).

A phosphoserine mark is found at S7 and S32. The active site involves U47. U47 is a non-standard amino acid (selenocysteine). N6-acetyllysine; alternate occurs at positions 62, 86, and 112. 3 positions are modified to N6-succinyllysine; alternate: K62, K86, and K112. K119 carries the N6-acetyllysine modification. At K146 the chain carries N6-acetyllysine; alternate. Residue K146 is modified to N6-succinyllysine; alternate. The residue at position 195 (S195) is a Phosphoserine.

It belongs to the glutathione peroxidase family. In terms of assembly, homotetramer. Interacts with MIEN1. During periods of oxidative stress, Sec-47 may react with a superoxide radical, irreversibly lose hydroselenide and be converted to dehydroalanine. In terms of tissue distribution, expressed in liver, kidney, lung, brain and heart.

It localises to the cytoplasm. The protein resides in the mitochondrion. The catalysed reaction is 2 glutathione + H2O2 = glutathione disulfide + 2 H2O. It catalyses the reaction a hydroperoxy polyunsaturated fatty acid + 2 glutathione = a hydroxy polyunsaturated fatty acid + glutathione disulfide + H2O. The enzyme catalyses tert-butyl hydroperoxide + 2 glutathione = tert-butanol + glutathione disulfide + H2O. It carries out the reaction cumene hydroperoxide + 2 glutathione = 2-phenylpropan-2-ol + glutathione disulfide + H2O. The catalysed reaction is (13S)-hydroperoxy-(9Z,11E)-octadecadienoate + 2 glutathione = (13S)-hydroxy-(9Z,11E)-octadecadienoate + glutathione disulfide + H2O. It catalyses the reaction (9S)-hydroperoxy-(10E,12Z)-octadecadienoate + 2 glutathione = (9S)-hydroxy-(10E,12Z)-octadecadienoate + glutathione disulfide + H2O. The enzyme catalyses (5S)-hydroperoxy-(6E,8Z,11Z,14Z)-eicosatetraenoate + 2 glutathione = (5S)-hydroxy-(6E,8Z,11Z,14Z)-eicosatetraenoate + glutathione disulfide + H2O. It carries out the reaction (12S)-hydroperoxy-(5Z,8Z,10E,14Z)-eicosatetraenoate + 2 glutathione = (12S)-hydroxy-(5Z,8Z,10E,14Z)-eicosatetraenoate + glutathione disulfide + H2O. The catalysed reaction is (12R)-hydroperoxy-(5Z,8Z,10E,14Z)-eicosatetraenoate + 2 glutathione = (12R)-hydroxy-(5Z,8Z,10E,14Z)-eicosatetraenoate + glutathione disulfide + H2O. It catalyses the reaction (15S)-hydroperoxy-(5Z,8Z,11Z,13E)-eicosatetraenoate + 2 glutathione = (15S)-hydroxy-(5Z,8Z,11Z,13E)-eicosatetraenoate + glutathione disulfide + H2O. The enzyme catalyses (5S)-hydroperoxy-(6E,8Z,11Z,14Z,17Z)-eicosapentaenoate + 2 glutathione = (5S)-hydroxy-(6E,8Z,11Z,14Z,17Z)-eicosapentaenoate + glutathione disulfide + H2O. It carries out the reaction (12S)-hydroperoxy-(5Z,8Z,10E,14Z,17Z)-eicosapentaenoate + 2 glutathione = (12S)-hydroxy-(5Z,8Z,10E,14Z,17Z)-eicosapentaenoate + glutathione disulfide + H2O. The catalysed reaction is (15S)-hydroperoxy-(5Z,8Z,11Z,13E,17Z)-eicosapentaenoate + 2 glutathione = (15S)-hydroxy-(5Z,8Z,11Z,13E,17Z)-eicosapentaenoate + glutathione disulfide + H2O. It catalyses the reaction (15S)-hydroperoxy-(11Z,13E)-eicosadienoate + 2 glutathione = (15S)-hydroxy-(11Z,13E)-eicosadienoate + glutathione disulfide + H2O. The enzyme catalyses (17S)-hydroperoxy-(4Z,7Z,10Z,13Z,15E,19Z)-docosahexaenoate + 2 glutathione = (17S)-hydroxy-(4Z,7Z,10Z,13Z,15E,19Z)-docosahexaenoate + glutathione disulfide + H2O. In terms of biological role, catalyzes the reduction of hydroperoxides in a glutathione-dependent manner thus regulating cellular redox homeostasis. Can reduce small soluble hydroperoxides such as H2O2, cumene hydroperoxide and tert-butyl hydroperoxide, as well as several fatty acid-derived hydroperoxides. In platelets catalyzes the reduction of 12-hydroperoxyeicosatetraenoic acid, the primary product of the arachidonate 12-lipoxygenase pathway. The polypeptide is Glutathione peroxidase 1 (Mus musculus (Mouse)).